The primary structure comprises 88 residues: CLAVATA3/ESR (CLE)-related protein 42 (88 aa).

The first 24 residues, 1-24, serve as a signal peptide directing secretion; it reads MRSPHITISLVFLFFLFLIIQTHQ. The interval 69-88 is disordered; that stretch reads KMIGANEHGVPSGPNPISNR. Hydroxyproline is present on residues Pro-79 and Pro-82. A glycan (O-linked (Ara...) hydroxyproline) is linked at Pro-82.

The protein belongs to the CLV3/ESR signal peptide family. Post-translationally, the O-glycosylation (arabinosylation) of the hydroxyproline Pro-82 enhances binding affinity of the CLE42p peptide for its receptor. Expressed at low levels in seedlings, roots and inflorescence.

Its subcellular location is the secreted. It is found in the extracellular space. Its function is as follows. Extracellular signal peptide that regulates cell fate. Represses tracheary element differentiation but promotes the formation of procambial cells. The polypeptide is CLAVATA3/ESR (CLE)-related protein 42 (Arabidopsis thaliana (Mouse-ear cress)).